Here is a 239-residue protein sequence, read N- to C-terminus: Lactate utilization protein A 1 (239 aa).

Belongs to the LutA/YkgE family.

In terms of biological role, is involved in L-lactate degradation and allows cells to grow with lactate as the sole carbon source. In Bacillus anthracis (strain A0248), this protein is Lactate utilization protein A 1.